The chain runs to 436 residues: GTPase Der (436 aa).

EngA-type G domains follow at residues 4–165 (NVIA…NFDS) and 172–347 (FKLS…ENLE). GTP is bound by residues 10 to 17 (GKPNVGKS), 57 to 61 (DTGGI), 119 to 122 (NKLD), 178 to 185 (GQPNSGKS), 225 to 229 (DTAGI), and 290 to 293 (NKWD). Residues 348 to 432 (REIKPSVLTN…PINIIFKNKS (85 aa)) enclose the KH-like domain.

The protein belongs to the TRAFAC class TrmE-Era-EngA-EngB-Septin-like GTPase superfamily. EngA (Der) GTPase family. In terms of assembly, associates with the 50S ribosomal subunit.

GTPase that plays an essential role in the late steps of ribosome biogenesis. This Mycoplasmopsis agalactiae (strain NCTC 10123 / CIP 59.7 / PG2) (Mycoplasma agalactiae) protein is GTPase Der.